The sequence spans 177 residues: Dual-action ribosomal maturation protein DarP (177 aa).

The protein belongs to the DarP family.

It localises to the cytoplasm. Functionally, member of a network of 50S ribosomal subunit biogenesis factors which assembles along the 30S-50S interface, preventing incorrect 23S rRNA structures from forming. Promotes peptidyl transferase center (PTC) maturation. This Histophilus somni (strain 2336) (Haemophilus somnus) protein is Dual-action ribosomal maturation protein DarP.